A 549-amino-acid chain; its full sequence is Elongator complex protein 3 (549 aa).

The 291-residue stretch at 84-374 (RTASGIAVVA…YRVQRDIPMP (291 aa)) folds into the Radical SAM core domain. The [4Fe-4S] cluster site is built by cysteine 101, cysteine 111, and cysteine 114. Residues lysine 166, 476 to 479 (ELHV), 499 to 501 (FGM), and tyrosine 532 each bind acetyl-CoA. The N-acetyltransferase domain maps to 398–549 (TECRDVRTRE…EGPYMVKKLD (152 aa)).

It belongs to the ELP3 family. In terms of assembly, component of the elongator complex. Interacts with transcriptional repressors snai1 and snai2; interaction with snai1 inhibits its ubiquitination and stabilizes it. The cofactor is [4Fe-4S] cluster.

It localises to the cytoplasm. The protein localises to the nucleus. The enzyme catalyses uridine(34) in tRNA + acetyl-CoA + S-adenosyl-L-methionine + H2O = 5-(carboxymethyl)uridine(34) in tRNA + 5'-deoxyadenosine + L-methionine + CoA + 2 H(+). It functions in the pathway tRNA modification; 5-methoxycarbonylmethyl-2-thiouridine-tRNA biosynthesis. Catalytic tRNA acetyltransferase subunit of the elongator complex which is required for multiple tRNA modifications, including mcm5U (5-methoxycarbonylmethyl uridine), mcm5s2U (5-methoxycarbonylmethyl-2-thiouridine), and ncm5U (5-carbamoylmethyl uridine). In the elongator complex, acts as a tRNA uridine(34) acetyltransferase by mediating formation of carboxymethyluridine in the wobble base at position 34 in tRNAs. Stabilizes transcriptional repressor snai1 by inhibiting its ubiquitination which promotes neural crest cell migration. This Xenopus tropicalis (Western clawed frog) protein is Elongator complex protein 3.